A 240-amino-acid chain; its full sequence is MVNSRETLDLTTFVGPAGNAVDWRISDSRVDYAAALAFMEARAAAIAAGEAPELVWLLEHPPVYTSGTSGKPEDLRDPRFPLVPTGRGGQVTYHGPGQRVAYVMLDLKRRRPDVRAYVAALEEMIIRTLDAFNVRGERREDRVGVWVRRPDKGEGYEDKIAAIGVRLKRWVSFHGIAINVEPDLTHFQAIVPCGVTDPRYGVTSLVDLGLPVTLTDVDLALRQAFESVFGATRASLPETA.

Residues 49-233 (GEAPELVWLL…AFESVFGATR (185 aa)) enclose the BPL/LPL catalytic domain. Substrate contacts are provided by residues 87 to 94 (RGGQVTYH), 162 to 164 (AIG), and 175 to 177 (GIA). The active-site Acyl-thioester intermediate is C193.

The protein belongs to the LipB family.

The protein resides in the cytoplasm. The catalysed reaction is octanoyl-[ACP] + L-lysyl-[protein] = N(6)-octanoyl-L-lysyl-[protein] + holo-[ACP] + H(+). Its pathway is protein modification; protein lipoylation via endogenous pathway; protein N(6)-(lipoyl)lysine from octanoyl-[acyl-carrier-protein]: step 1/2. Functionally, catalyzes the transfer of endogenously produced octanoic acid from octanoyl-acyl-carrier-protein onto the lipoyl domains of lipoate-dependent enzymes. Lipoyl-ACP can also act as a substrate although octanoyl-ACP is likely to be the physiological substrate. The sequence is that of Octanoyltransferase from Bradyrhizobium sp. (strain BTAi1 / ATCC BAA-1182).